The following is a 268-amino-acid chain: Aliphatic sulfonates import ATP-binding protein SsuB 3 (268 aa).

Positions 1 to 27 are disordered; it reads MTAAEAPLPPLAPRERTATTAAERRTG. A compositionally biased stretch (basic and acidic residues) spans 13–26; sequence PRERTATTAAERRT. In terms of domain architecture, ABC transporter spans 32–247; that stretch reads VSLSGVRKSF…DRNDPEALRY (216 aa). Residue 64–71 participates in ATP binding; sequence GPSGTGKT.

The protein belongs to the ABC transporter superfamily. Aliphatic sulfonates importer (TC 3.A.1.17.2) family. The complex is composed of two ATP-binding proteins (SsuB), two transmembrane proteins (SsuC) and a solute-binding protein (SsuA).

It is found in the cell membrane. The catalysed reaction is ATP + H2O + aliphatic sulfonate-[sulfonate-binding protein]Side 1 = ADP + phosphate + aliphatic sulfonateSide 2 + [sulfonate-binding protein]Side 1.. Part of the ABC transporter complex SsuABC involved in aliphatic sulfonates import. Responsible for energy coupling to the transport system. This chain is Aliphatic sulfonates import ATP-binding protein SsuB 3, found in Rhodococcus jostii (strain RHA1).